A 619-amino-acid chain; its full sequence is TOX high mobility group box family member 4 (619 aa).

Disordered regions lie at residues L155–V227, E304–P335, and L436–V458. At T176 the chain carries Phosphothreonine. S178 and S182 each carry phosphoserine. Residues L183–R193 are compositionally biased toward basic and acidic residues. The segment covering K208–K218 has biased composition (basic residues). The Nuclear localization signal signature appears at K213–K218. Residues P223–K291 constitute a DNA-binding region (HMG box). T313 carries the post-translational modification Phosphothreonine. A Phosphoserine modification is found at S315. A compositionally biased stretch (low complexity) spans T320–P335. The span at L436–P453 shows a compositional bias: pro residues. R479 carries the asymmetric dimethylarginine modification. 6 positions are modified to phosphoserine: S531, S548, S550, S558, S560, and S565.

As to quaternary structure, component of the PNUTS-PP1 phosphatase complex, composed of PPP1R10/PNUTS, TOX4, WDR82 and PPP1CA or PPP1CB or PPP1CC. Interacts with PPP1R10/PNUTS. Interacts with FOXO1 and CREB1 (increased by cAMP); FOXO1 and CREB1 are required for full induction of TOX4-dependent activity and the interactions are inhibited by insulin.

It is found in the nucleus. Its subcellular location is the chromosome. With respect to regulation, in liver, recruited to target gene promoters following treatment with dexamethasone and cAMP. Binding is decreased in presence of insulin. In terms of biological role, transcription factor that modulates cell fate reprogramming from the somatic state to the pluripotent and neuronal fate. In liver, controls the expression of hormone-regulated gluconeogenic genes such as G6PC1 and PCK1. This regulation is independent of the insulin receptor activation. Also acts as a regulatory component of protein phosphatase 1 (PP1) complexes. Component of the PNUTS-PP1 protein phosphatase complex, a PP1 complex that regulates RNA polymerase II transcription pause-release. PNUTS-PP1 also plays a role in the control of chromatin structure and cell cycle progression during the transition from mitosis into interphase. The polypeptide is TOX high mobility group box family member 4 (Tox4) (Rattus norvegicus (Rat)).